A 441-amino-acid chain; its full sequence is 3-phosphoshikimate 1-carboxyvinyltransferase (441 aa).

The 3-phosphoshikimate site is built by Lys25, Ser26, and Arg30. Lys25 serves as a coordination point for phosphoenolpyruvate. Residues Gly97 and Arg125 each contribute to the phosphoenolpyruvate site. 3-phosphoshikimate is bound by residues Ser169, Gln170, Asp311, and Lys338. Gln170 provides a ligand contact to phosphoenolpyruvate. Asp311 acts as the Proton acceptor in catalysis. Phosphoenolpyruvate contacts are provided by Arg342, Arg383, and Lys410.

It belongs to the EPSP synthase family. In terms of assembly, monomer.

The protein localises to the cytoplasm. It catalyses the reaction 3-phosphoshikimate + phosphoenolpyruvate = 5-O-(1-carboxyvinyl)-3-phosphoshikimate + phosphate. Its pathway is metabolic intermediate biosynthesis; chorismate biosynthesis; chorismate from D-erythrose 4-phosphate and phosphoenolpyruvate: step 6/7. Functionally, catalyzes the transfer of the enolpyruvyl moiety of phosphoenolpyruvate (PEP) to the 5-hydroxyl of shikimate-3-phosphate (S3P) to produce enolpyruvyl shikimate-3-phosphate and inorganic phosphate. The sequence is that of 3-phosphoshikimate 1-carboxyvinyltransferase from Chlamydia muridarum (strain MoPn / Nigg).